The primary structure comprises 365 residues: 2-aminoethylphosphonate--pyruvate transaminase (365 aa).

Residue K194 is modified to N6-(pyridoxal phosphate)lysine.

Belongs to the class-V pyridoxal-phosphate-dependent aminotransferase family. PhnW subfamily. In terms of assembly, homodimer. It depends on pyridoxal 5'-phosphate as a cofactor.

It catalyses the reaction (2-aminoethyl)phosphonate + pyruvate = phosphonoacetaldehyde + L-alanine. Functionally, involved in phosphonate degradation. In Bacillus thuringiensis (strain Al Hakam), this protein is 2-aminoethylphosphonate--pyruvate transaminase.